The primary structure comprises 172 residues: Interferon tau-3 (172 aa).

2 cysteine pairs are disulfide-bonded: Cys1–Cys99 and Cys29–Cys139.

The protein belongs to the alpha/beta interferon family. IFN-alphaII subfamily. As to expression, constitutively and exclusively expressed in the mononuclear cells of the extraembryonic trophectoderm.

The protein resides in the secreted. In terms of biological role, paracrine hormone primarily responsible for maternal recognition of pregnancy. Interacts with endometrial receptors, probably type I interferon receptors, and blocks estrogen receptor expression, preventing the estrogen-induced increase in oxytocin receptor expression in the endometrium. This results in the suppression of the pulsatile endometrial release of the luteolytic hormone prostaglandin F2-alpha, hindering the regression of the corpus luteum (luteolysis) and therefore a return to ovarian cyclicity. This, and a possible direct effect of IFN-tau on prostaglandin synthesis, leads in turn to continued ovarian progesterone secretion, which stimulates the secretion by the endometrium of the nutrients required for the growth of the conceptus. In summary, displays particularly high antiviral and antiproliferative potency concurrently with particular weak cytotoxicity, high antiluteolytic activity and immunomodulatory properties. In contrast with other IFNs, IFN-tau is not virally inducible. The polypeptide is Interferon tau-3 (IFNT3) (Ovis aries (Sheep)).